We begin with the raw amino-acid sequence, 397 residues long: Acetylornithine aminotransferase (397 aa).

Residue F129 coordinates pyridoxal 5'-phosphate. Residue R132 coordinates N(2)-acetyl-L-ornithine. A pyridoxal 5'-phosphate-binding site is contributed by 214–217; the sequence is DEVQ. K243 carries the N6-(pyridoxal phosphate)lysine modification. S271 lines the N(2)-acetyl-L-ornithine pocket. T272 is a pyridoxal 5'-phosphate binding site.

It belongs to the class-III pyridoxal-phosphate-dependent aminotransferase family. ArgD subfamily. Homodimer. Pyridoxal 5'-phosphate serves as cofactor.

Its subcellular location is the cytoplasm. The catalysed reaction is N(2)-acetyl-L-ornithine + 2-oxoglutarate = N-acetyl-L-glutamate 5-semialdehyde + L-glutamate. It functions in the pathway amino-acid biosynthesis; L-arginine biosynthesis; N(2)-acetyl-L-ornithine from L-glutamate: step 4/4. The sequence is that of Acetylornithine aminotransferase from Neisseria meningitidis serogroup A / serotype 4A (strain DSM 15465 / Z2491).